We begin with the raw amino-acid sequence, 254 residues long: GTP cyclohydrolase 1 type 2 homolog (254 aa).

The a divalent metal cation site is built by His-68, His-69, Asp-106, His-222, and Glu-226.

This sequence belongs to the GTP cyclohydrolase I type 2/NIF3 family. Homohexamer.

The protein is GTP cyclohydrolase 1 type 2 homolog of Allochromatium vinosum (strain ATCC 17899 / DSM 180 / NBRC 103801 / NCIMB 10441 / D) (Chromatium vinosum).